Here is a 314-residue protein sequence, read N- to C-terminus: Olfactory receptor 14K1 (314 aa).

The Extracellular segment spans residues 1–23 (MTNQTQMMEFLLVRFTENWVLLR). Asn-3 is a glycosylation site (N-linked (GlcNAc...) asparagine). A helical membrane pass occupies residues 24 to 44 (LHALLFSLIYLTAVLMNLVII). Residues 45 to 52 (LLMILDHR) are Cytoplasmic-facing. Residues 53 to 73 (LHMAMYFFLRHLSFLDLCLIS) traverse the membrane as a helical segment. Residues 74 to 97 (ATVPKSILNSVASTDSISFLGCVL) lie on the Extracellular side of the membrane. The cysteines at positions 95 and 187 are disulfide-linked. A helical membrane pass occupies residues 98 to 118 (QLFLVVLLAGSEIGILTAMSY). Residues 119–131 (DRYAAICCPLHCE) are Cytoplasmic-facing. A helical transmembrane segment spans residues 132–152 (AVMSRGLCVQLMALSWLNRGA). Residues 153-194 (LGLLYTAGTFSLNFYGSDELHQFFCDVPALLKLTCSKEHAII) lie on the Extracellular side of the membrane. A helical transmembrane segment spans residues 195 to 215 (SVSVAIGVCYAFSCLVCIVVS). Over 216 to 235 (YVYIFSAVLRISQRQRQSKA) the chain is Cytoplasmic. A helical transmembrane segment spans residues 236 to 256 (FSNCVPHLIVVTVFLVTGAVA). Over 257–269 (YLKPGSDAPSILD) the chain is Extracellular. Residues 270-290 (LLVSVFYSVAPPTLNPVIYCL) form a helical membrane-spanning segment. The Cytoplasmic portion of the chain corresponds to 291 to 314 (KNKDIKSALSKVLWNVRSSGVMKR).

The protein belongs to the G-protein coupled receptor 1 family.

Its subcellular location is the cell membrane. In terms of biological role, odorant receptor. The chain is Olfactory receptor 14K1 (OR14K1) from Homo sapiens (Human).